Consider the following 248-residue polypeptide: Isoprenyl transferase (248 aa).

The active site involves Asp23. Position 23 (Asp23) interacts with Mg(2+). Residues 24-27 (GNGR), Trp28, Arg36, His40, and 68-70 (STE) each bind substrate. The active-site Proton acceptor is the Asn71. Substrate-binding positions include Trp72, Arg74, Arg185, and 191-193 (RIS). Glu204 is a Mg(2+) binding site.

This sequence belongs to the UPP synthase family. Homodimer. Requires Mg(2+) as cofactor.

Catalyzes the condensation of isopentenyl diphosphate (IPP) with allylic pyrophosphates generating different type of terpenoids. The polypeptide is Isoprenyl transferase (Neisseria meningitidis serogroup A / serotype 4A (strain DSM 15465 / Z2491)).